A 468-amino-acid polypeptide reads, in one-letter code: Beta-amylase (468 aa).

The first 36 residues, 1–36 (MTLYRSLWKKGCMLLLSLVLSLTAFIGSPSNTASAA), serve as a signal peptide directing secretion. Asp76 is a substrate binding site. Ca(2+) contacts are provided by Glu83 and Asp87. The substrate site is built by His116 and Asp124. Cys118 and Cys126 are disulfide-bonded. Residue Glu170 coordinates Ca(2+). The Proton donor role is filled by Glu198. The substrate site is built by Lys314, His319, and Thr357. Glu394 functions as the Proton acceptor in the catalytic mechanism. Substrate-binding positions include 395–396 (NA) and Arg423.

It belongs to the glycosyl hydrolase 14 family. Ca(2+) is required as a cofactor.

The enzyme catalyses Hydrolysis of (1-&gt;4)-alpha-D-glucosidic linkages in polysaccharides so as to remove successive maltose units from the non-reducing ends of the chains.. This is Beta-amylase from Cytobacillus firmus (Bacillus firmus).